The primary structure comprises 437 residues: Argininosuccinate lyase (437 aa).

The protein belongs to the lyase 1 family. Argininosuccinate lyase subfamily.

It is found in the cytoplasm. It carries out the reaction 2-(N(omega)-L-arginino)succinate = fumarate + L-arginine. It functions in the pathway amino-acid biosynthesis; L-arginine biosynthesis; L-arginine from L-ornithine and carbamoyl phosphate: step 3/3. This is Argininosuccinate lyase from Clostridium acetobutylicum (strain ATCC 824 / DSM 792 / JCM 1419 / IAM 19013 / LMG 5710 / NBRC 13948 / NRRL B-527 / VKM B-1787 / 2291 / W).